A 457-amino-acid polypeptide reads, in one-letter code: Argininosuccinate lyase (457 aa).

The protein belongs to the lyase 1 family. Argininosuccinate lyase subfamily.

The protein localises to the cytoplasm. It catalyses the reaction 2-(N(omega)-L-arginino)succinate = fumarate + L-arginine. Its pathway is amino-acid biosynthesis; L-arginine biosynthesis; L-arginine from L-ornithine and carbamoyl phosphate: step 3/3. This Haemophilus influenzae (strain PittEE) protein is Argininosuccinate lyase.